A 130-amino-acid chain; its full sequence is Small ribosomal subunit protein uS11 (130 aa).

It belongs to the universal ribosomal protein uS11 family. Part of the 30S ribosomal subunit. Interacts with proteins S7 and S18. Binds to IF-3.

Located on the platform of the 30S subunit, it bridges several disparate RNA helices of the 16S rRNA. Forms part of the Shine-Dalgarno cleft in the 70S ribosome. In Thermotoga petrophila (strain ATCC BAA-488 / DSM 13995 / JCM 10881 / RKU-1), this protein is Small ribosomal subunit protein uS11.